Reading from the N-terminus, the 97-residue chain is Cornifin (97 aa).

A disordered region spans residues 1–42 (MSSQQQKQPCTPPPQPQQQQVKQPCQPPPQEPCVPKTKEPCH). The residue at position 2 (Ser-2) is an N-acetylserine. A run of 9 repeats spans residues 3–14 (SQQQKQPCTPPP), 18–29 (QQQVKQPCQPPP), 31–38 (EPCVPKTK), 39–46 (EPCHPKVP), 47–54 (EPCQPKVP), 55–62 (EPCQPKVP), 63–70 (EPCHPKVP), 71–78 (EPCQPKVP), and 79–85 (EPCPSPV). The interval 3 to 29 (SQQQKQPCTPPPQPQQQQVKQPCQPPP) is 2 X 12 AA approximate repeats. The interval 31–85 (EPCVPKTKEPCHPKVPEPCQPKVPEPCQPKVPEPCHPKVPEPCQPKVPEPCPSPV) is 7 X 8 AA approximate tandem repeats.

This sequence belongs to the cornifin (SPRR) family. Not detected in normal lung tissue but seen in tumor tissues. Cells around the keratin pearls contain high levels.

The protein localises to the cytoplasm. Cross-linked envelope protein of keratinocytes. It is a keratinocyte protein that first appears in the cell cytosol, but ultimately becomes cross-linked to membrane proteins by transglutaminase. All that results in the formation of an insoluble envelope beneath the plasma membrane. The protein is Cornifin (SPRP) of Sus scrofa (Pig).